Reading from the N-terminus, the 150-residue chain is Putative transmembrane protein DDB_G0277665 (150 aa).

The next 2 helical transmembrane spans lie at 4–24 and 42–62; these read TLIIIIVSVIVGYLISHFNIL and VIVGAIVGQALIYFFVFFLPL.

It is found in the membrane. This Dictyostelium discoideum (Social amoeba) protein is Putative transmembrane protein DDB_G0277665.